A 66-amino-acid polypeptide reads, in one-letter code: UPF0337 protein BA_0987/GBAA_0987/BAS0923 (66 aa).

The tract at residues 1–22 is disordered; sequence MSESGLKEQITGKVEKTKGQVK. The span at 13 to 22 shows a compositional bias: basic and acidic residues; the sequence is KVEKTKGQVK.

This sequence belongs to the UPF0337 (CsbD) family.

The sequence is that of UPF0337 protein BA_0987/GBAA_0987/BAS0923 from Bacillus anthracis.